The chain runs to 1108 residues: Lon protease homolog, mitochondrial (1108 aa).

Residues Met-1 to Arg-62 constitute a mitochondrion transit peptide. 2 disordered regions span residues Pro-24–Ser-192 and Leu-299–Lys-318. Positions Arg-36–Arg-53 are enriched in low complexity. 2 stretches are compositionally biased toward basic and acidic residues: residues Glu-78–Gly-103 and Lys-119–Pro-146. The segment covering Ser-161 to Gly-171 has biased composition (polar residues). Composition is skewed to basic and acidic residues over residues Asp-174 to Leu-188 and Asn-309 to Lys-318. A Lon N-terminal domain is found at Val-200–Leu-452. Gly-605–Thr-612 serves as a coordination point for ATP. Basic and acidic residues predominate over residues Asp-821–Thr-855. The tract at residues Asp-821–Ala-862 is disordered. Residues Thr-895–Glu-1081 form the Lon proteolytic domain. Catalysis depends on residues Ser-987 and Lys-1030.

The protein belongs to the peptidase S16 family. As to quaternary structure, homohexamer or homoheptamer. Organized in a ring with a central cavity.

It is found in the mitochondrion matrix. It catalyses the reaction Hydrolysis of proteins in presence of ATP.. ATP-dependent serine protease that mediates the selective degradation of misfolded, unassembled or oxidatively damaged polypeptides as well as certain short-lived regulatory proteins in the mitochondrial matrix. May also have a chaperone function in the assembly of inner membrane protein complexes. Participates in the regulation of mitochondrial gene expression and in the maintenance of the integrity of the mitochondrial genome. Binds to mitochondrial DNA in a site-specific manner. This is Lon protease homolog, mitochondrial (pim1) from Aspergillus fumigatus (strain ATCC MYA-4609 / CBS 101355 / FGSC A1100 / Af293) (Neosartorya fumigata).